The sequence spans 160 residues: Nucleotide-binding protein Patl_4311 (160 aa).

The protein belongs to the YajQ family.

Its function is as follows. Nucleotide-binding protein. In Pseudoalteromonas atlantica (strain T6c / ATCC BAA-1087), this protein is Nucleotide-binding protein Patl_4311.